A 175-amino-acid polypeptide reads, in one-letter code: Glycine-rich RNA-binding protein 1 (175 aa).

Positions 3–81 (AKVYVGNLSW…RRIRVNMANS (79 aa)) constitute an RRM domain. Positions 114 to 175 (GQPGGFQQPG…GYGGYNGQSQ (62 aa)) are disordered. Over residues 122 to 131 (PGGFQQQGGY) the composition is skewed to low complexity. A compositionally biased stretch (gly residues) spans 132–141 (PQQGGYGGYQ). Residues 142 to 162 (QPGFQPQQGGYGAPQQGYGAP) are compositionally biased toward low complexity. Over residues 163-175 (QQGGYGGYNGQSQ) the composition is skewed to gly residues.

This sequence belongs to the glycine-rich RNA-binding protein family. As to quaternary structure, part of large ribonucleoprotein complexes (mRNPs) containing RNA-binding proteins RRM4 and PAB1, endosome-binding protein UPA1, core scaffold protein UPA2 and associated factor GRP1.

It is found in the endosome. Functionally, component of endosomal mRNA transport that regulates polarity of the infectious hyphae by transporting a broad spectrum of cargo mRNAs from the nucleus to cell poles. This chain is Glycine-rich RNA-binding protein 1, found in Mycosarcoma maydis (Corn smut fungus).